The chain runs to 1183 residues: LRR receptor-like serine/threonine-protein kinase FLS2 (1183 aa).

Residues 1-41 form the signal peptide; the sequence is MERNKFASKMSQHYTKTICIAVVLVAVLFSLSSAAAAGSGA. The Extracellular segment spans residues 42–809; sequence AVSVQLEALL…GKKRVFSRTG (768 aa). A disulfide bridge connects residues cysteine 87 and cysteine 94. N-linked (GlcNAc...) asparagine glycosylation is found at asparagine 88 and asparagine 120. LRR repeat units lie at residues 97–120, 121–145, 147–169, 171–193, 194–217, 218–241, 242–265, 267–289, 290–313, 315–337, 338–361, 363–385, and 386–409; these read AGQV…FLGN, ISTL…LGRL, ELEQ…LCNC, AMWA…IGDL, SNLE…MAKL, KGIM…IGDL, SNLQ…LGRC, NLTL…LGEL, TNLE…LRRC, SLLN…LGEL, PSLQ…LTNL, NLTI…IGSL, and RNLR…ISNC. The cysteines at positions 167 and 189 are disulfide-linked. Asparagine 168 and asparagine 181 each carry an N-linked (GlcNAc...) asparagine glycan. Asparagine 267 carries an N-linked (GlcNAc...) asparagine glycan. N-linked (GlcNAc...) asparagine glycosylation is found at asparagine 363, asparagine 395, asparagine 408, and asparagine 414. 14 LRR repeats span residues 433 to 457, 459 to 480, 481 to 505, 507 to 529, 530 to 553, 555 to 577, 578 to 600, 601 to 625, 627 to 651, 652 to 675, 676 to 699, 701 to 724, 725 to 748, and 749 to 773; these read LQSL…LFDC, QLQK…LVGQ, LGNL…IGNM, KLIS…ISNM, SSLQ…VFEL, QLTI…VANL, RSLS…ALGR, LDQL…VIAS, SNVQ…IGGL, VMVQ…LAGC, KNLY…LFPQ, DLLT…IAAL, KHIQ…LANL, and TALR…VFRN. N-linked (GlcNAc...) asparagine glycans are attached at residues asparagine 483, asparagine 504, and asparagine 528. N-linked (GlcNAc...) asparagine glycosylation is present at asparagine 591. Residue asparagine 634 is glycosylated (N-linked (GlcNAc...) asparagine). Asparagine 707, asparagine 747, asparagine 755, and asparagine 773 each carry an N-linked (GlcNAc...) asparagine glycan. A helical transmembrane segment spans residues 810 to 830; sequence LVILVVLIALSTLLLLMVATI. Residues 831–1183 are Cytoplasmic-facing; it reads LLVSYRRYRR…LKMSKLVGED (353 aa). Residues 876–1179 enclose the Protein kinase domain; sequence FDQGNVIGSS…LSSLLKMSKL (304 aa). Residues 882–890 and lysine 908 contribute to the ATP site; that span reads IGSSNLSTV. Aspartate 1013 serves as the catalytic Proton acceptor.

This sequence belongs to the protein kinase superfamily. Ser/Thr protein kinase family. As to quaternary structure, interacts with SERK2.

It is found in the cell membrane. It catalyses the reaction L-seryl-[protein] + ATP = O-phospho-L-seryl-[protein] + ADP + H(+). The enzyme catalyses L-threonyl-[protein] + ATP = O-phospho-L-threonyl-[protein] + ADP + H(+). Constitutes the pattern-recognition receptor (PPR) that determines the specific perception of flagellin (flg22), a potent elicitor of the defense response to pathogen-associated molecular patterns (PAMPs). Recognizes flg22 from Pseudomonas aeruginosa and Acidovorax avenae. flg22 is a peptide derived from the bacterial flagellin N-terminus sequence. Does not recognize flg22 from Xanthomonas oryzae pv. oryzae (Xoo) or Xanthomonas oryzae pv. oryzicola (Xoc). The polypeptide is LRR receptor-like serine/threonine-protein kinase FLS2 (Oryza sativa subsp. japonica (Rice)).